A 365-amino-acid polypeptide reads, in one-letter code: Chorismate synthase (365 aa).

Residues 41-51 (IQKELDRRRPG) are compositionally biased toward basic and acidic residues. Residues 41-62 (IQKELDRRRPGQSEVSTPRSEA) are disordered. Residue Arg-48 coordinates NADP(+). FMN-binding positions include 125-127 (RSS), Gly-285, 300-304 (KPTPS), and Arg-327.

It belongs to the chorismate synthase family. The cofactor is FMNH2.

The catalysed reaction is 5-O-(1-carboxyvinyl)-3-phosphoshikimate = chorismate + phosphate. It functions in the pathway metabolic intermediate biosynthesis; chorismate biosynthesis; chorismate from D-erythrose 4-phosphate and phosphoenolpyruvate: step 7/7. Catalyzes the anti-1,4-elimination of the C-3 phosphate and the C-6 proR hydrogen from 5-enolpyruvylshikimate-3-phosphate (EPSP) to yield chorismate, which is the branch point compound that serves as the starting substrate for the three terminal pathways of aromatic amino acid biosynthesis. This reaction introduces a second double bond into the aromatic ring system. This chain is Chorismate synthase, found in Methanosarcina mazei (strain ATCC BAA-159 / DSM 3647 / Goe1 / Go1 / JCM 11833 / OCM 88) (Methanosarcina frisia).